The chain runs to 305 residues: UDP-3-O-acyl-N-acetylglucosamine deacetylase (305 aa).

His-79, His-238, and Asp-242 together coordinate Zn(2+). Residue His-265 is the Proton donor of the active site.

This sequence belongs to the LpxC family. Requires Zn(2+) as cofactor.

It carries out the reaction a UDP-3-O-[(3R)-3-hydroxyacyl]-N-acetyl-alpha-D-glucosamine + H2O = a UDP-3-O-[(3R)-3-hydroxyacyl]-alpha-D-glucosamine + acetate. Its pathway is glycolipid biosynthesis; lipid IV(A) biosynthesis; lipid IV(A) from (3R)-3-hydroxytetradecanoyl-[acyl-carrier-protein] and UDP-N-acetyl-alpha-D-glucosamine: step 2/6. Catalyzes the hydrolysis of UDP-3-O-myristoyl-N-acetylglucosamine to form UDP-3-O-myristoylglucosamine and acetate, the committed step in lipid A biosynthesis. This Haemophilus influenzae (strain PittGG) protein is UDP-3-O-acyl-N-acetylglucosamine deacetylase.